A 60-amino-acid chain; its full sequence is Metallothionein B (60 aa).

Positions 1 to 28 (MDPCECTKSGTCNCGGSCTCTNCSCTSC) are beta. C4, C6, C12, C14, C18, C20, C23, C25, C28, C32, C33, C35, C36, C40, C43, C47, C49, C54, C58, and C59 together coordinate a divalent metal cation. An alpha region spans residues 29–60 (KKSCCPCCPSGCTKCASGCVCKGKTCDTSCCQ).

It belongs to the metallothionein superfamily. Type 1 family.

Metallothioneins have a high content of cysteine residues that bind various heavy metals. The polypeptide is Metallothionein B (mtb) (Chaenocephalus aceratus (Blackfin icefish)).